A 342-amino-acid polypeptide reads, in one-letter code: Trans-enoyl reductase himH (342 aa).

46-49 (TDWK) lines the NADP(+) pocket. 133 to 140 (LSVSTAAS) contributes to the substrate binding site. NADP(+) is bound by residues 168–171 (SSSV), 191–194 (SQAN), 255–256 (VM), and 329–330 (VS).

The protein belongs to the zinc-containing alcohol dehydrogenase family. In terms of assembly, monomer.

Its pathway is secondary metabolite biosynthesis. Trans-enoyl reductase; part of the him gene cluster that mediates the biosynthesis of himeic acid A, a ubiquitin-activating enzyme (E1) inhibitor. First, himA, together with the trans-enoyl reductase himH, catalyzes the formation of apolyketide chain, which is then condensed with leucine by the NRPS activity of himA. Dieckmann cyclization and release from himA gives a tetramic acid intermediate as the product of himA PKS-NRPS. HimG then catalyzes alpha-oxidation of the tetramic acid ring, with a subsequent rearrangement to yield apyrone intermediate. Two terminal methyl groups of polyketide and amide side chains are oxidized to carboxylic acids by himC cytochrome P450 monooxygenase to form himeic acid A. Himeic acid A is further converted to himeic acid B and C during culture growth. No gene responsible for pyrone to pyridone conversion was found in the him gene cluster and himeic acid A is non-enzymatically converted to himeic acid C by the incorporation of an ammonium nitrogen atom in a pH5 buffer, and to himeic acid B at a conversion ratio of 50% during incubation in MeOH for 5 days. This Aspergillus japonicus protein is Trans-enoyl reductase himH.